The chain runs to 277 residues: Large ribosomal subunit protein uL2 (277 aa).

The interval 222 to 277 (GSVMNPNDHPHGGGEGKAPVGRKAPSTPWGKPALGLKTRNKKAKSDKLIVRRRNEK) is disordered. Residues 264 to 277 (AKSDKLIVRRRNEK) show a composition bias toward basic and acidic residues.

This sequence belongs to the universal ribosomal protein uL2 family. Part of the 50S ribosomal subunit. Forms a bridge to the 30S subunit in the 70S ribosome.

One of the primary rRNA binding proteins. Required for association of the 30S and 50S subunits to form the 70S ribosome, for tRNA binding and peptide bond formation. It has been suggested to have peptidyltransferase activity; this is somewhat controversial. Makes several contacts with the 16S rRNA in the 70S ribosome. This chain is Large ribosomal subunit protein uL2, found in Streptococcus thermophilus (strain CNRZ 1066).